Here is a 110-residue protein sequence, read N- to C-terminus: MSLTEARFHDLVDATQQNIEDVFDDSGLDVDLENSAGVLTVKFEGGTQLIFSRQEPLRQLWLAARSGGFHFDYDEENQCWACDSSDELLSEMLERFTVEQAGVELDFSEI.

Belongs to the frataxin family.

Involved in iron-sulfur (Fe-S) cluster assembly. May act as a regulator of Fe-S biogenesis. The polypeptide is Iron-sulfur cluster assembly protein CyaY (Pseudomonas syringae pv. syringae (strain B728a)).